We begin with the raw amino-acid sequence, 488 residues long: ATP synthase subunit beta (488 aa).

ATP is bound at residue 164-171 (GGAGVGKT).

This sequence belongs to the ATPase alpha/beta chains family. In terms of assembly, F-type ATPases have 2 components, CF(1) - the catalytic core - and CF(0) - the membrane proton channel. CF(1) has five subunits: alpha(3), beta(3), gamma(1), delta(1), epsilon(1). CF(0) has four main subunits: a(1), b(1), b'(1) and c(9-12).

Its subcellular location is the cellular thylakoid membrane. It carries out the reaction ATP + H2O + 4 H(+)(in) = ADP + phosphate + 5 H(+)(out). Its function is as follows. Produces ATP from ADP in the presence of a proton gradient across the membrane. The catalytic sites are hosted primarily by the beta subunits. This is ATP synthase subunit beta from Prochlorococcus marinus (strain SARG / CCMP1375 / SS120).